The chain runs to 776 residues: LPS-assembly protein LptD (776 aa).

The N-terminal stretch at 1-24 (MQHFSRTFLAASIATALFAPYAQA) is a signal peptide.

The protein belongs to the LptD family. As to quaternary structure, component of the lipopolysaccharide transport and assembly complex. Interacts with LptE and LptA.

It localises to the cell outer membrane. Its function is as follows. Together with LptE, is involved in the assembly of lipopolysaccharide (LPS) at the surface of the outer membrane. This is LPS-assembly protein LptD from Vibrio vulnificus (strain YJ016).